Here is a 115-residue protein sequence, read N- to C-terminus: Ribonuclease P protein component 4 (115 aa).

Zn(2+) is bound by residues C66, C69, C96, and C99.

It belongs to the eukaryotic/archaeal RNase P protein component 4 family. Consists of a catalytic RNA component and at least 4-5 protein subunits. It depends on Zn(2+) as a cofactor.

The protein localises to the cytoplasm. The catalysed reaction is Endonucleolytic cleavage of RNA, removing 5'-extranucleotides from tRNA precursor.. In terms of biological role, part of ribonuclease P, a protein complex that generates mature tRNA molecules by cleaving their 5'-ends. This Hyperthermus butylicus (strain DSM 5456 / JCM 9403 / PLM1-5) protein is Ribonuclease P protein component 4.